A 426-amino-acid polypeptide reads, in one-letter code: Serine--tRNA ligase (426 aa).

Residue 233 to 235 (TAE) coordinates L-serine. 264 to 266 (RSE) serves as a coordination point for ATP. E287 serves as a coordination point for L-serine. 351-354 (EISS) contributes to the ATP binding site. S387 contacts L-serine.

The protein belongs to the class-II aminoacyl-tRNA synthetase family. Type-1 seryl-tRNA synthetase subfamily. Homodimer. The tRNA molecule binds across the dimer.

It localises to the cytoplasm. The catalysed reaction is tRNA(Ser) + L-serine + ATP = L-seryl-tRNA(Ser) + AMP + diphosphate + H(+). It carries out the reaction tRNA(Sec) + L-serine + ATP = L-seryl-tRNA(Sec) + AMP + diphosphate + H(+). Its pathway is aminoacyl-tRNA biosynthesis; selenocysteinyl-tRNA(Sec) biosynthesis; L-seryl-tRNA(Sec) from L-serine and tRNA(Sec): step 1/1. Catalyzes the attachment of serine to tRNA(Ser). Is also able to aminoacylate tRNA(Sec) with serine, to form the misacylated tRNA L-seryl-tRNA(Sec), which will be further converted into selenocysteinyl-tRNA(Sec). The sequence is that of Serine--tRNA ligase from Pseudomonas syringae pv. syringae (strain B728a).